We begin with the raw amino-acid sequence, 666 residues long: Probable potassium transport system protein Kup (666 aa).

Helical transmembrane passes span Phe53–Leu73, Val89–Val109, Leu144–Thr164, Pro181–Val201, Ala212–Ile232, Ala247–Leu267, Trp291–Leu311, Leu324–Ala344, Ile381–Phe401, Tyr411–Trp431, Ala441–Leu461, and Leu463–Thr483.

The protein belongs to the HAK/KUP transporter (TC 2.A.72) family.

The protein localises to the cell inner membrane. The catalysed reaction is K(+)(in) + H(+)(in) = K(+)(out) + H(+)(out). Transport of potassium into the cell. Likely operates as a K(+):H(+) symporter. The polypeptide is Probable potassium transport system protein Kup (Nitrobacter hamburgensis (strain DSM 10229 / NCIMB 13809 / X14)).